The sequence spans 243 residues: Interleukin-27 subunit alpha (243 aa).

Residues 1 to 28 (MGQTAGDLGWRLSLLLLPLLLVQAGVWG) form the signal peptide.

This sequence belongs to the IL-6 superfamily. Heterodimer with EBI3; not disulfide-linked. This heterodimer is known as interleukin IL-27. In terms of processing, O-glycosylated. In terms of tissue distribution, expressed in monocytes and in placenta.

Its subcellular location is the secreted. Its function is as follows. Associates with EBI3 to form the IL-27 interleukin, a heterodimeric cytokine which functions in innate immunity. IL-27 has pro- and anti-inflammatory properties, that can regulate T-helper cell development, suppress T-cell proliferation, stimulate cytotoxic T-cell activity, induce isotype switching in B-cells, and that has diverse effects on innate immune cells. Among its target cells are CD4 T-helper cells which can differentiate in type 1 effector cells (TH1), type 2 effector cells (TH2) and IL17 producing helper T-cells (TH17). It drives rapid clonal expansion of naive but not memory CD4 T-cells. It also strongly synergizes with IL-12 to trigger interferon-gamma/IFN-gamma production of naive CD4 T-cells, binds to the cytokine receptor WSX-1/TCCR which appears to be required but not sufficient for IL-27-mediated signal transduction. IL-27 potentiate the early phase of TH1 response and suppress TH2 and TH17 differentiation. It induces the differentiation of TH1 cells via two distinct pathways, p38 MAPK/TBX21- and ICAM1/ITGAL/ERK-dependent pathways. It also induces STAT1, STAT3, STAT4 and STAT5 phosphorylation and activates TBX21/T-Bet via STAT1 with resulting IL12RB2 up-regulation, an event crucial to TH1 cell commitment. It suppresses the expression of GATA3, the inhibitor TH1 cells development. In CD8 T-cells, it activates STATs as well as GZMB. IL-27 reveals to be a potent inhibitor of TH17 cell development and of IL-17 production. Indeed IL27 alone is also able to inhibit the production of IL17 by CD4 and CD8 T-cells. While IL-27 suppressed the development of pro-inflammatory Th17 cells via STAT1, it inhibits the development of anti-inflammatory inducible regulatory T-cells, iTreg, independently of STAT1. IL-27 also has an effect on cytokine production, it suppresses pro-inflammatory cytokine production such as IL2, IL4, IL5 and IL6 and activates suppressors of cytokine signaling such as SOCS1 and SOCS3. Apart from suppression of cytokine production, IL-27 also antagonizes the effects of some cytokines such as IL6 through direct effects on T-cells. Another important role of IL-27 is its antitumor activity as well as its antiangiogenic activity with activation of production of antiangiogenic chemokines such as IP-10/CXCL10 and MIG/CXCL9. In vein endothelial cells, it induces IRF1/interferon regulatory factor 1 and increase the expression of MHC class II transactivator/CIITA with resulting up-regulation of major histocompatibility complex class II. IL-27 also demonstrates antiviral activity with inhibitory properties on HIV-1 replication. The protein is Interleukin-27 subunit alpha (IL27) of Homo sapiens (Human).